The primary structure comprises 106 residues: Thiosulfate sulfurtransferase GlpE (106 aa).

The 89-residue stretch at 17–105 (EQSEAKLVDI…WQRAELPIVR (89 aa)) folds into the Rhodanese domain. Cysteine 65 acts as the Cysteine persulfide intermediate in catalysis.

This sequence belongs to the GlpE family.

The protein localises to the cytoplasm. It catalyses the reaction thiosulfate + hydrogen cyanide = thiocyanate + sulfite + 2 H(+). The enzyme catalyses thiosulfate + [thioredoxin]-dithiol = [thioredoxin]-disulfide + hydrogen sulfide + sulfite + 2 H(+). In terms of biological role, transferase that catalyzes the transfer of sulfur from thiosulfate to thiophilic acceptors such as cyanide or dithiols. May function in a CysM-independent thiosulfate assimilation pathway by catalyzing the conversion of thiosulfate to sulfite, which can then be used for L-cysteine biosynthesis. This Vibrio campbellii (strain ATCC BAA-1116) protein is Thiosulfate sulfurtransferase GlpE.